We begin with the raw amino-acid sequence, 283 residues long: 4-hydroxy-3-methylbut-2-enyl diphosphate reductase (283 aa).

Cys-12 is a [4Fe-4S] cluster binding site. Positions 40 and 73 each coordinate (2E)-4-hydroxy-3-methylbut-2-enyl diphosphate. Dimethylallyl diphosphate is bound by residues His-40 and His-73. His-40 and His-73 together coordinate isopentenyl diphosphate. Cys-95 provides a ligand contact to [4Fe-4S] cluster. His-123 serves as a coordination point for (2E)-4-hydroxy-3-methylbut-2-enyl diphosphate. His-123 is a dimethylallyl diphosphate binding site. His-123 is an isopentenyl diphosphate binding site. Catalysis depends on Glu-125, which acts as the Proton donor. Thr-161 contacts (2E)-4-hydroxy-3-methylbut-2-enyl diphosphate. Residue Cys-189 participates in [4Fe-4S] cluster binding. The (2E)-4-hydroxy-3-methylbut-2-enyl diphosphate site is built by Ser-217, Asn-219, and Ser-261. Dimethylallyl diphosphate contacts are provided by Ser-217, Asn-219, and Ser-261. Isopentenyl diphosphate is bound by residues Ser-217, Asn-219, and Ser-261.

The protein belongs to the IspH family. The cofactor is [4Fe-4S] cluster.

The enzyme catalyses isopentenyl diphosphate + 2 oxidized [2Fe-2S]-[ferredoxin] + H2O = (2E)-4-hydroxy-3-methylbut-2-enyl diphosphate + 2 reduced [2Fe-2S]-[ferredoxin] + 2 H(+). The catalysed reaction is dimethylallyl diphosphate + 2 oxidized [2Fe-2S]-[ferredoxin] + H2O = (2E)-4-hydroxy-3-methylbut-2-enyl diphosphate + 2 reduced [2Fe-2S]-[ferredoxin] + 2 H(+). The protein operates within isoprenoid biosynthesis; dimethylallyl diphosphate biosynthesis; dimethylallyl diphosphate from (2E)-4-hydroxy-3-methylbutenyl diphosphate: step 1/1. It participates in isoprenoid biosynthesis; isopentenyl diphosphate biosynthesis via DXP pathway; isopentenyl diphosphate from 1-deoxy-D-xylulose 5-phosphate: step 6/6. Catalyzes the conversion of 1-hydroxy-2-methyl-2-(E)-butenyl 4-diphosphate (HMBPP) into a mixture of isopentenyl diphosphate (IPP) and dimethylallyl diphosphate (DMAPP). Acts in the terminal step of the DOXP/MEP pathway for isoprenoid precursor biosynthesis. The sequence is that of 4-hydroxy-3-methylbut-2-enyl diphosphate reductase from Citrifermentans bemidjiense (strain ATCC BAA-1014 / DSM 16622 / JCM 12645 / Bem) (Geobacter bemidjiensis).